Consider the following 124-residue polypeptide: Small ribosomal subunit protein uS12 (124 aa).

A disordered region spans residues 1 to 32 (MPTIQQLVRKGRQDKVSKNKTPALKGSPQRRG). Asp89 is modified (3-methylthioaspartic acid).

The protein belongs to the universal ribosomal protein uS12 family. In terms of assembly, part of the 30S ribosomal subunit. Contacts proteins S8 and S17. May interact with IF1 in the 30S initiation complex.

With S4 and S5 plays an important role in translational accuracy. Functionally, interacts with and stabilizes bases of the 16S rRNA that are involved in tRNA selection in the A site and with the mRNA backbone. Located at the interface of the 30S and 50S subunits, it traverses the body of the 30S subunit contacting proteins on the other side and probably holding the rRNA structure together. The combined cluster of proteins S8, S12 and S17 appears to hold together the shoulder and platform of the 30S subunit. The polypeptide is Small ribosomal subunit protein uS12 (Nocardioides sp. (strain ATCC BAA-499 / JS614)).